A 130-amino-acid polypeptide reads, in one-letter code: Small ribosomal subunit protein uS11 (130 aa).

The protein belongs to the universal ribosomal protein uS11 family. Part of the 30S ribosomal subunit. Interacts with proteins S7 and S18. Binds to IF-3.

Located on the platform of the 30S subunit, it bridges several disparate RNA helices of the 16S rRNA. Forms part of the Shine-Dalgarno cleft in the 70S ribosome. This chain is Small ribosomal subunit protein uS11, found in Shewanella denitrificans (strain OS217 / ATCC BAA-1090 / DSM 15013).